Reading from the N-terminus, the 219-residue chain is Ribose-5-phosphate isomerase A (219 aa).

Substrate contacts are provided by residues 28–31, 81–84, and 94–97; these read TGST, DGAD, and KGGG. Residue Glu103 is the Proton acceptor of the active site. Residue Lys121 participates in substrate binding.

Belongs to the ribose 5-phosphate isomerase family. Homodimer.

It carries out the reaction aldehydo-D-ribose 5-phosphate = D-ribulose 5-phosphate. Its pathway is carbohydrate degradation; pentose phosphate pathway; D-ribose 5-phosphate from D-ribulose 5-phosphate (non-oxidative stage): step 1/1. Its function is as follows. Catalyzes the reversible conversion of ribose-5-phosphate to ribulose 5-phosphate. This chain is Ribose-5-phosphate isomerase A, found in Salmonella arizonae (strain ATCC BAA-731 / CDC346-86 / RSK2980).